Reading from the N-terminus, the 509-residue chain is MKEYRVYLERARSRQQDFLYPLIFREYIYGLAYSHIDRSIFVENGGYDNKYSLLNVKRLITQMYQQNHLIISTNDSNKNPFLGYNKNFYSQIIAEGFAIVVEIPFFLQLSSSLEEAEIIKSYKNVRSIHSIFPFLEDKFTYLNYVSDIRIPYPIHLEILVQILRYWVKDAPFFHLLRLFLYDFCNWNCFIPTKKSISTFSKSNPRLFLFLYNFYVCEYESIFLFLRNKSSHLRLKSFSVFNERIFFYAKREHLVEVFSKDFSYTLPFFKDPNIHYVRYQGKCILASKNGPFLMNKWKHYFIHLWQCFFDVWSQPRTININQLSEHSIQLLGYFSNVRLNRSVVRSQMLQNTFLIEIVSKKLDIIVPIIPIIRSLAKAKFCNVLGHPISKPVWADSSDFDIIERFLRICSNLCHYYHGSSKKKSLYRIKYILRLSCIKTLACKHKSTVRAFLQTSGSEELLEEFFTEEEEILPWNFQILSLICHSKSFTSHGFHSNRIWYLDILFSNDLE.

The protein belongs to the intron maturase 2 family. MatK subfamily.

The protein resides in the plastid. The protein localises to the chloroplast. Functionally, usually encoded in the trnK tRNA gene intron. Probably assists in splicing its own and other chloroplast group II introns. In Trifolium semipilosum (Kenya clover), this protein is Maturase K.